A 206-amino-acid polypeptide reads, in one-letter code: Small ribosomal subunit protein eS1 (206 aa).

It belongs to the eukaryotic ribosomal protein eS1 family.

The protein is Small ribosomal subunit protein eS1 of Natronomonas pharaonis (strain ATCC 35678 / DSM 2160 / CIP 103997 / JCM 8858 / NBRC 14720 / NCIMB 2260 / Gabara) (Halobacterium pharaonis).